Here is a 607-residue protein sequence, read N- to C-terminus: ATP-dependent RNA helicase-like protein DB10 (607 aa).

The segment covering 1 to 10 (MAVVTASSAG) has biased composition (polar residues). Disordered stretches follow at residues 1-25 (MAVV…KPWK) and 66-108 (VFVS…DGTS). A WW domain is found at 18–52 (PTLPKPWKGLVDGTTGFIYFWNPETNDTQYERPVP). Polar residues predominate over residues 89-98 (RGSNNKIARS). Residues 99-108 (SSDRFHDGTS) are compositionally biased toward basic and acidic residues. The Q motif motif lies at 145–173 (TSFEATGFPSEIVREMHQAGFSAPTPIQA). The region spanning 176 to 350 (WPIALQGRDI…ADLLVNSVQV (175 aa)) is the Helicase ATP-binding domain. An ATP-binding site is contributed by 189 to 196 (AKTGSGKT). The DEAD box motif lies at 298–301 (DEAD). The region spanning 379–523 (RVEQILRSKE…CVPTELRDMA (145 aa)) is the Helicase C-terminal domain. The segment at 519–607 (LRDMASRGGG…WSGKKSRFTD (89 aa)) is disordered. Residues 538–548 (SGPGGRGGRGG) show a composition bias toward gly residues. The segment covering 562-574 (GYDRGSRDSDRYG) has biased composition (basic and acidic residues).

Belongs to the DEAD box helicase family.

It catalyses the reaction ATP + H2O = ADP + phosphate + H(+). The polypeptide is ATP-dependent RNA helicase-like protein DB10 (Nicotiana sylvestris (Wood tobacco)).